The following is a 486-amino-acid chain: 2-hydroxymuconic semialdehyde dehydrogenase (486 aa).

Active-site residues include Glu254 and Cys288.

It belongs to the aldehyde dehydrogenase family. As to quaternary structure, homodimer.

The enzyme catalyses (2Z,4E)-2-hydroxy-6-oxohexa-2,4-dienoate + NAD(+) + H2O = (2Z,4E)-2-hydroxyhexa-2,4-dienedioate + NADH + 2 H(+). It participates in aromatic compound metabolism; benzoate degradation via hydroxylation. 2-hydroxymuconic acid semialdehyde can be converted to 2-hydroxypent-2,4-dienoate either directly by the action of 2-hydroxymuconic semialdehyde hydrolase (HMSH) or by the action of three sequential enzymes, the first of which is HMSD. Can oxidize not only 2-hydroxymuconic semialdehyde and its analogs but also benzaldehyde and its analogs. This is 2-hydroxymuconic semialdehyde dehydrogenase (xylG) from Pseudomonas putida (Arthrobacter siderocapsulatus).